A 456-amino-acid chain; its full sequence is Trigger factor (456 aa).

Residues 166-245 (GDYANIDLNA…VNSVKAEELP (80 aa)) enclose the PPIase FKBP-type domain.

This sequence belongs to the FKBP-type PPIase family. Tig subfamily.

The protein localises to the cytoplasm. The enzyme catalyses [protein]-peptidylproline (omega=180) = [protein]-peptidylproline (omega=0). Its function is as follows. Involved in protein export. Acts as a chaperone by maintaining the newly synthesized protein in an open conformation. Functions as a peptidyl-prolyl cis-trans isomerase. The polypeptide is Trigger factor (Bifidobacterium adolescentis (strain ATCC 15703 / DSM 20083 / NCTC 11814 / E194a)).